Reading from the N-terminus, the 394-residue chain is Bifunctional enzyme IspD/IspF (394 aa).

The 2-C-methyl-D-erythritol 4-phosphate cytidylyltransferase stretch occupies residues M1 to V230. Positions L231 to L394 are 2-C-methyl-D-erythritol 2,4-cyclodiphosphate synthase. A divalent metal cation is bound by residues D237 and H239. Residues D237–H239 and H263–S264 each bind 4-CDP-2-C-methyl-D-erythritol 2-phosphate. Residue H271 coordinates a divalent metal cation. Residues D285–G287, F290–D294, T361–E364, and F368 contribute to the 4-CDP-2-C-methyl-D-erythritol 2-phosphate site.

This sequence in the N-terminal section; belongs to the IspD/TarI cytidylyltransferase family. IspD subfamily. In the C-terminal section; belongs to the IspF family. It depends on a divalent metal cation as a cofactor.

The enzyme catalyses 2-C-methyl-D-erythritol 4-phosphate + CTP + H(+) = 4-CDP-2-C-methyl-D-erythritol + diphosphate. It carries out the reaction 4-CDP-2-C-methyl-D-erythritol 2-phosphate = 2-C-methyl-D-erythritol 2,4-cyclic diphosphate + CMP. The protein operates within isoprenoid biosynthesis; isopentenyl diphosphate biosynthesis via DXP pathway; isopentenyl diphosphate from 1-deoxy-D-xylulose 5-phosphate: step 2/6. It participates in isoprenoid biosynthesis; isopentenyl diphosphate biosynthesis via DXP pathway; isopentenyl diphosphate from 1-deoxy-D-xylulose 5-phosphate: step 4/6. In terms of biological role, bifunctional enzyme that catalyzes the formation of 4-diphosphocytidyl-2-C-methyl-D-erythritol from CTP and 2-C-methyl-D-erythritol 4-phosphate (MEP) (IspD), and catalyzes the conversion of 4-diphosphocytidyl-2-C-methyl-D-erythritol 2-phosphate (CDP-ME2P) to 2-C-methyl-D-erythritol 2,4-cyclodiphosphate (ME-CPP) with a corresponding release of cytidine 5-monophosphate (CMP) (IspF). This is Bifunctional enzyme IspD/IspF from Desulforudis audaxviator (strain MP104C).